The sequence spans 259 residues: Malonyl-[acyl-carrier protein] O-methyltransferase (259 aa).

It belongs to the methyltransferase superfamily.

It catalyses the reaction malonyl-[ACP] + S-adenosyl-L-methionine = malonyl-[ACP] methyl ester + S-adenosyl-L-homocysteine. The protein operates within cofactor biosynthesis; biotin biosynthesis. Converts the free carboxyl group of a malonyl-thioester to its methyl ester by transfer of a methyl group from S-adenosyl-L-methionine (SAM). It allows to synthesize pimeloyl-ACP via the fatty acid synthetic pathway. This is Malonyl-[acyl-carrier protein] O-methyltransferase from Anoxybacillus flavithermus (strain DSM 21510 / WK1).